We begin with the raw amino-acid sequence, 122 residues long: Large ribosomal subunit protein uL14 (122 aa).

It belongs to the universal ribosomal protein uL14 family. In terms of assembly, part of the 50S ribosomal subunit. Forms a cluster with proteins L3 and L19. In the 70S ribosome, L14 and L19 interact and together make contacts with the 16S rRNA in bridges B5 and B8.

In terms of biological role, binds to 23S rRNA. Forms part of two intersubunit bridges in the 70S ribosome. This Bacillus velezensis (strain DSM 23117 / BGSC 10A6 / LMG 26770 / FZB42) (Bacillus amyloliquefaciens subsp. plantarum) protein is Large ribosomal subunit protein uL14.